Here is a 609-residue protein sequence, read N- to C-terminus: Threonine--tRNA ligase (609 aa).

Residues 215 to 506 form a catalytic region; the sequence is DHRIIGNEMK…LIEHTAGELP (292 aa). Cysteine 307, histidine 358, and histidine 483 together coordinate Zn(2+).

Belongs to the class-II aminoacyl-tRNA synthetase family. As to quaternary structure, homodimer. The cofactor is Zn(2+).

Its subcellular location is the cytoplasm. The catalysed reaction is tRNA(Thr) + L-threonine + ATP = L-threonyl-tRNA(Thr) + AMP + diphosphate + H(+). In terms of biological role, catalyzes the attachment of threonine to tRNA(Thr) in a two-step reaction: L-threonine is first activated by ATP to form Thr-AMP and then transferred to the acceptor end of tRNA(Thr). Also edits incorrectly charged L-seryl-tRNA(Thr). The chain is Threonine--tRNA ligase from Campylobacter hominis (strain ATCC BAA-381 / DSM 21671 / CCUG 45161 / LMG 19568 / NCTC 13146 / CH001A).